A 372-amino-acid chain; its full sequence is Anhydro-N-acetylmuramic acid kinase (372 aa).

13–20 (GTSMDGID) is an ATP binding site.

Belongs to the anhydro-N-acetylmuramic acid kinase family.

The enzyme catalyses 1,6-anhydro-N-acetyl-beta-muramate + ATP + H2O = N-acetyl-D-muramate 6-phosphate + ADP + H(+). The protein operates within amino-sugar metabolism; 1,6-anhydro-N-acetylmuramate degradation. Its pathway is cell wall biogenesis; peptidoglycan recycling. In terms of biological role, catalyzes the specific phosphorylation of 1,6-anhydro-N-acetylmuramic acid (anhMurNAc) with the simultaneous cleavage of the 1,6-anhydro ring, generating MurNAc-6-P. Is required for the utilization of anhMurNAc either imported from the medium or derived from its own cell wall murein, and thus plays a role in cell wall recycling. The polypeptide is Anhydro-N-acetylmuramic acid kinase (Rhizobium johnstonii (strain DSM 114642 / LMG 32736 / 3841) (Rhizobium leguminosarum bv. viciae)).